Here is a 145-residue protein sequence, read N- to C-terminus: Protein AggB (145 aa).

Positions 1–24 are cleaved as a signal peptide; that stretch reads MLKKSILPMSCGVLVMVMSGLLDA.

This sequence to E.coli AfaD.

The chain is Protein AggB (aggB) from Escherichia coli.